We begin with the raw amino-acid sequence, 133 residues long: Putative biopolymer transport protein ExbD-like 1 (133 aa).

The Cytoplasmic segment spans residues 1–15 (MNYDNYWDEDKPELN). A helical membrane pass occupies residues 16-32 (ITPLVDVMLVLLAILMV). The Periplasmic portion of the chain corresponds to 33 to 133 (TTPTLTYKEE…FLKVSLITSP (101 aa)).

It belongs to the ExbD/TolR family.

It localises to the cell inner membrane. This chain is Putative biopolymer transport protein ExbD-like 1, found in Helicobacter pylori (strain J99 / ATCC 700824) (Campylobacter pylori J99).